Consider the following 231-residue polypeptide: Phosphatidylserine decarboxylase proenzyme (231 aa).

S188 serves as the catalytic Schiff-base intermediate with substrate; via pyruvic acid. Pyruvic acid (Ser); by autocatalysis is present on S188.

The protein belongs to the phosphatidylserine decarboxylase family. PSD-A subfamily. In terms of assembly, heterodimer of a large membrane-associated beta subunit and a small pyruvoyl-containing alpha subunit. The cofactor is pyruvate. In terms of processing, is synthesized initially as an inactive proenzyme. Formation of the active enzyme involves a self-maturation process in which the active site pyruvoyl group is generated from an internal serine residue via an autocatalytic post-translational modification. Two non-identical subunits are generated from the proenzyme in this reaction, and the pyruvate is formed at the N-terminus of the alpha chain, which is derived from the carboxyl end of the proenzyme. The post-translation cleavage follows an unusual pathway, termed non-hydrolytic serinolysis, in which the side chain hydroxyl group of the serine supplies its oxygen atom to form the C-terminus of the beta chain, while the remainder of the serine residue undergoes an oxidative deamination to produce ammonia and the pyruvoyl prosthetic group on the alpha chain.

It is found in the cell membrane. The enzyme catalyses a 1,2-diacyl-sn-glycero-3-phospho-L-serine + H(+) = a 1,2-diacyl-sn-glycero-3-phosphoethanolamine + CO2. The protein operates within phospholipid metabolism; phosphatidylethanolamine biosynthesis; phosphatidylethanolamine from CDP-diacylglycerol: step 2/2. Functionally, catalyzes the formation of phosphatidylethanolamine (PtdEtn) from phosphatidylserine (PtdSer). In Rickettsia bellii (strain OSU 85-389), this protein is Phosphatidylserine decarboxylase proenzyme.